The following is a 20-amino-acid chain: U1-poneritoxin-Ni1a (20 aa).

The residue at position 20 (Lys-20) is a Lysine amide.

It belongs to the non-disulfide-bridged peptide (NDBP) superfamily. Medium-length antimicrobial peptide (group 3) family. Ponericin-W subfamily. Expressed by the venom gland.

It is found in the secreted. It localises to the target cell membrane. Functionally, has activity against Gram-positive bacteria. Has insecticidal and hemolytic activities. May act by disrupting the integrity of the bacterial cell membrane. The sequence is that of U1-poneritoxin-Ni1a from Neoponera inversa (Ant).